The sequence spans 138 residues: Growth factor (138 aa).

The first 19 residues, 1 to 19 (MSMKYLMLLFAAMIIRSFA), serve as a signal peptide directing secretion. Asparagine 34 carries an N-linked (GlcNAc...) asparagine; by host glycan. The EGF-like domain maps to 41–81 (AIRLCGPEGDGYCLHGDCIHARDIDGMYCRCSHGYTGIRCQ). Disulfide bonds link cysteine 45–cysteine 58, cysteine 53–cysteine 69, and cysteine 71–cysteine 80. N-linked (GlcNAc...) asparagine; by host glycosylation is present at asparagine 95.

It belongs to the orthopoxvirus OPG019 family.

The protein localises to the secreted. In terms of biological role, stimulates cellular proliferation (hyperplasia)and mobility around infected cells to promote rapid and efficient spread of infection. The chain is Growth factor (OPG019) from Rabbitpox virus (strain Utrecht) (RPV).